The following is a 292-amino-acid chain: Shikimate dehydrogenase (NADP(+)) (292 aa).

Residues 25–27 and threonine 72 each bind shikimate; that span reads SKS. Lysine 76 (proton acceptor) is an active-site residue. Positions 97 and 113 each coordinate shikimate. Residues 137 to 141, 161 to 166, and methionine 230 contribute to the NADP(+) site; these read GAGGA and NRTQSK. A shikimate-binding site is contributed by tyrosine 232. Glycine 254 lines the NADP(+) pocket.

It belongs to the shikimate dehydrogenase family. Homodimer.

The enzyme catalyses shikimate + NADP(+) = 3-dehydroshikimate + NADPH + H(+). It participates in metabolic intermediate biosynthesis; chorismate biosynthesis; chorismate from D-erythrose 4-phosphate and phosphoenolpyruvate: step 4/7. Functionally, involved in the biosynthesis of the chorismate, which leads to the biosynthesis of aromatic amino acids. Catalyzes the reversible NADPH linked reduction of 3-dehydroshikimate (DHSA) to yield shikimate (SA). This chain is Shikimate dehydrogenase (NADP(+)), found in Shewanella sp. (strain ANA-3).